The primary structure comprises 447 residues: Methylenetetrahydrofolate--tRNA-(uracil-5-)-methyltransferase TrmFO (447 aa).

Position 9 to 14 (9 to 14 (GGGLAG)) interacts with FAD.

Belongs to the MnmG family. TrmFO subfamily. FAD serves as cofactor.

Its subcellular location is the cytoplasm. It catalyses the reaction uridine(54) in tRNA + (6R)-5,10-methylene-5,6,7,8-tetrahydrofolate + NADH + H(+) = 5-methyluridine(54) in tRNA + (6S)-5,6,7,8-tetrahydrofolate + NAD(+). It carries out the reaction uridine(54) in tRNA + (6R)-5,10-methylene-5,6,7,8-tetrahydrofolate + NADPH + H(+) = 5-methyluridine(54) in tRNA + (6S)-5,6,7,8-tetrahydrofolate + NADP(+). Functionally, catalyzes the folate-dependent formation of 5-methyl-uridine at position 54 (M-5-U54) in all tRNAs. The sequence is that of Methylenetetrahydrofolate--tRNA-(uracil-5-)-methyltransferase TrmFO from Paramagnetospirillum magneticum (strain ATCC 700264 / AMB-1) (Magnetospirillum magneticum).